Reading from the N-terminus, the 92-residue chain is Protease inhibitors (92 aa).

The first 19 residues, 1–19, serve as a signal peptide directing secretion; it reads MKFALALCAAVLLVVLVQA. 2 consecutive Pacifastin domains span residues 20-54 and 57-92; these read EEKC…CQPA and EISC…CPNQ. Disulfide bonds link cysteine 23–cysteine 38, cysteine 33–cysteine 51, cysteine 36–cysteine 46, cysteine 60–cysteine 75, cysteine 70–cysteine 89, and cysteine 73–cysteine 84. The O-linked (Fuc) threonine glycan is linked to threonine 65.

Belongs to the protease inhibitor I19 family. Brain and fat body.

The protein localises to the secreted. Both LCMI I and II are inhibitors of chymotrypsin and elastase (in vitro). They both inhibit the prophenol oxidase activation cascade. This is Protease inhibitors from Locusta migratoria (Migratory locust).